The chain runs to 423 residues: Replication factor C large subunit (423 aa).

63–70 (GPPGIGKT) is a binding site for ATP.

Belongs to the activator 1 small subunits family. RfcL subfamily. In terms of assembly, heteromultimer composed of small subunits (RfcS) and large subunits (RfcL).

Its function is as follows. Part of the RFC clamp loader complex which loads the PCNA sliding clamp onto DNA. The polypeptide is Replication factor C large subunit (Pyrobaculum islandicum (strain DSM 4184 / JCM 9189 / GEO3)).